The primary structure comprises 456 residues: NADPH-ferredoxin reductase FprA (456 aa).

Residues serine 14, glutamate 40, leucine 48, and valine 84 each contribute to the FAD site. NADP(+)-binding positions include arginine 110, 155 to 158 (NGNV), 199 to 200 (RR), and glutamate 211. FAD contacts are provided by residues tryptophan 359 and 366 to 368 (GVI). Glycine 366 is an NADP(+) binding site.

Belongs to the ferredoxin--NADP reductase type 1 family. Monomer. FAD is required as a cofactor.

The enzyme catalyses 2 reduced [2Fe-2S]-[ferredoxin] + NADP(+) + H(+) = 2 oxidized [2Fe-2S]-[ferredoxin] + NADPH. May serve as electron transfer protein and supply electrons to P450 systems. The polypeptide is NADPH-ferredoxin reductase FprA (fprA) (Mycobacterium tuberculosis (strain CDC 1551 / Oshkosh)).